A 424-amino-acid chain; its full sequence is UDP-N-acetylglucosamine 1-carboxyvinyltransferase (424 aa).

Lys22–Asn23 is a binding site for phosphoenolpyruvate. A UDP-N-acetyl-alpha-D-glucosamine-binding site is contributed by Arg98. Cys122 (proton donor) is an active-site residue. Position 122 is a 2-(S-cysteinyl)pyruvic acid O-phosphothioketal (Cys122). Residues Arg127–Gln131, Asp312, and Ile334 each bind UDP-N-acetyl-alpha-D-glucosamine.

It belongs to the EPSP synthase family. MurA subfamily.

The protein localises to the cytoplasm. The catalysed reaction is phosphoenolpyruvate + UDP-N-acetyl-alpha-D-glucosamine = UDP-N-acetyl-3-O-(1-carboxyvinyl)-alpha-D-glucosamine + phosphate. Its pathway is cell wall biogenesis; peptidoglycan biosynthesis. Functionally, cell wall formation. Adds enolpyruvyl to UDP-N-acetylglucosamine. The protein is UDP-N-acetylglucosamine 1-carboxyvinyltransferase of Xanthomonas axonopodis pv. citri (strain 306).